We begin with the raw amino-acid sequence, 62 residues long: Short neurotoxin 1 (62 aa).

The span at Met-1–Cys-17 shows a compositional bias: polar residues. Positions Met-1–Gly-20 are disordered. 4 disulfide bridges follow: Cys-3–Cys-24, Cys-17–Cys-41, Cys-43–Cys-54, and Cys-55–Cys-60.

The protein belongs to the three-finger toxin family. Short-chain subfamily. Type I alpha-neurotoxin sub-subfamily. Expressed by the venom gland.

It localises to the secreted. Its function is as follows. Binds to muscle nicotinic acetylcholine receptor (nAChR) and inhibit acetylcholine from binding to the receptor, thereby impairing neuromuscular transmission. In Acanthophis antarcticus (Common death adder), this protein is Short neurotoxin 1.